The following is a 362-amino-acid chain: Peptide chain release factor 1 (362 aa).

Gln-236 carries the N5-methylglutamine modification.

The protein belongs to the prokaryotic/mitochondrial release factor family. Post-translationally, methylated by PrmC. Methylation increases the termination efficiency of RF1.

Its subcellular location is the cytoplasm. Its function is as follows. Peptide chain release factor 1 directs the termination of translation in response to the peptide chain termination codons UAG and UAA. In Lactobacillus gasseri (strain ATCC 33323 / DSM 20243 / BCRC 14619 / CIP 102991 / JCM 1131 / KCTC 3163 / NCIMB 11718 / NCTC 13722 / AM63), this protein is Peptide chain release factor 1.